Reading from the N-terminus, the 97-residue chain is MANNKSAKKRIQIAERNRLINKSYKSTVRTLTKKTLENCEKYKKEPNDENKNLVTTSLNKAFSLIDKAVKKNVLHKNNGANRKSKINNFVKTTLTTK.

This sequence belongs to the bacterial ribosomal protein bS20 family.

Its function is as follows. Binds directly to 16S ribosomal RNA. In Prochlorococcus marinus (strain MIT 9301), this protein is Small ribosomal subunit protein bS20.